The primary structure comprises 142 residues: uncharacterized protein (142 aa).

The N-acetyltransferase domain occupies 1 to 120 (MADKFDANDE…TILKWEKNMD (120 aa)).

This sequence belongs to the acetyltransferase family.

This is an uncharacterized protein from Streptococcus pyogenes serotype M3 (strain ATCC BAA-595 / MGAS315).